Reading from the N-terminus, the 343-residue chain is 3-hydroxy-3-methylglutaryl-CoA lyase, cytoplasmic (343 aa).

A lipid anchor (N-myristoyl glycine) is attached at Gly2. The Pyruvate carboxyltransferase domain maps to 48–315 (VKIVEVGPRD…NTGVDLHKVM (268 aa)). Residue Arg56 participates in substrate binding. A divalent metal cation is bound by residues Asp57, His248, and His250. Cys281 is a catalytic residue. Position 290 (Asn290) interacts with a divalent metal cation.

It belongs to the HMG-CoA lyase family. A divalent metal cation is required as a cofactor. As to expression, present at high level in duodenum and small intestine (at protein level).

It localises to the cytoplasm. The protein resides in the cytosol. Its subcellular location is the endoplasmic reticulum membrane. It catalyses the reaction (3S)-3-hydroxy-3-methylglutaryl-CoA = acetoacetate + acetyl-CoA. It functions in the pathway metabolic intermediate metabolism; (S)-3-hydroxy-3-methylglutaryl-CoA degradation; acetoacetate from (S)-3-hydroxy-3-methylglutaryl-CoA: step 1/1. In terms of biological role, non-mitochondrial 3-hydroxy-3-methylglutaryl-CoA lyase that catalyzes a cation-dependent cleavage of (S)-3-hydroxy-3-methylglutaryl-CoA into acetyl-CoA and acetoacetate, a key step in ketogenesis, the products of which support energy production in nonhepatic animal tissues. The sequence is that of 3-hydroxy-3-methylglutaryl-CoA lyase, cytoplasmic (Hmgcll1) from Rattus norvegicus (Rat).